The following is a 635-amino-acid chain: Protein phosphatase PP2A regulatory subunit A (635 aa).

Positions 1–27 (MSGARSTTAGAVPSAATTSTTSTTSNS) are enriched in low complexity. The disordered stretch occupies residues 1-33 (MSGARSTTAGAVPSAATTSTTSTTSNSKDSDSN). HEAT repeat units follow at residues 34 to 72 (ESLY…GPER), 73 to 111 (TRNE…GGPQ), 112 to 150 (YATI…SQEQ), 151 to 189 (LFSD…KDDS), 190 to 228 (LRKN…TQNL), 229 to 273 (GLST…NAKG), 274 to 316 (DESH…SNQA), 317 to 356 (YIDE…DPSI), 357 to 395 (ILNK…NKDQ), 396 to 434 (VINN…GIEL), 435 to 473 (LSDS…GMQF), 474 to 512 (FDQQ…GSDW), 513 to 553 (CRDE…SLDV), 554 to 598 (VTEQ…YDAL), and 599 to 632 (IKNT…CQEL).

Belongs to the phosphatase 2A regulatory subunit A family. As to quaternary structure, PP2A exists in several trimeric forms, all of which consist of a core composed of a catalytic subunit associated with a 65 kDa regulatory subunit (PR65) (subunit A). The core complex associates with a third, variable subunit (subunit B), which confers distinct properties to the holoenzyme.

Its function is as follows. Phosphatase 2A affects a variety of biological processes in the cell such as transcription, cell cycle progression and cellular morphogenesis, and provides an initial identification of critical substrates for this phosphatase. The regulatory subunit may direct the catalytic subunit to distinct, albeit overlapping, subsets of substrates. The sequence is that of Protein phosphatase PP2A regulatory subunit A (TPD3) from Saccharomyces cerevisiae (strain ATCC 204508 / S288c) (Baker's yeast).